The chain runs to 338 residues: MSLQHEKVTIAPLVLLSALDHYERTQTKENKRCVGVILGDANSSTIRVTNSFALPFEEDEKNSDVWFLDHNYIENMNEMCKKINAKEKLIGWYHSGPKLRASDLKINELFKKYTQNNPLLLIVDVKQQGVGLPTDAYVAIEQVKDDGTSTEKTFLHLPCTIEAEEAEEIGVEHLLRDVRDQAAGGLSIRLTNQLKSLKGLQSKLKDVVEYLDKVINKELPINHTILGKLQDVFNLLPNLGTPDDDEIDVENHDRINISNNLQKALTVKTNDELMVIYISNLVRSIIAFDDLIENKIQNKKIQEQRVKDKQSKVSDDSESESGDKEATAPLIQRKNKKN.

S2 is modified (N-acetylserine). Residues 8 to 143 (VTIAPLVLLS…TDAYVAIEQV (136 aa)) enclose the MPN domain. Basic and acidic residues predominate over residues 301–326 (IQEQRVKDKQSKVSDDSESESGDKEA). The interval 301-338 (IQEQRVKDKQSKVSDDSESESGDKEATAPLIQRKNKKN) is disordered. A phosphoserine mark is found at S314, S317, and S319. The residue at position 327 (T327) is a Phosphothreonine.

Belongs to the peptidase M67A family. Post-translationally, N-acetylated by NAT1.

Functionally, acts as a regulatory subunit of the 26S proteasome which is involved in the ATP-dependent degradation of ubiquitinated proteins. This chain is 26S proteasome regulatory subunit RPN8 (RPN8), found in Saccharomyces cerevisiae (strain ATCC 204508 / S288c) (Baker's yeast).